The chain runs to 56 residues: Large ribosomal subunit protein uL30 (56 aa).

It belongs to the universal ribosomal protein uL30 family. As to quaternary structure, part of the 50S ribosomal subunit.

This chain is Large ribosomal subunit protein uL30, found in Nitratidesulfovibrio vulgaris (strain ATCC 29579 / DSM 644 / CCUG 34227 / NCIMB 8303 / VKM B-1760 / Hildenborough) (Desulfovibrio vulgaris).